We begin with the raw amino-acid sequence, 703 residues long: Elongation factor G 1 (703 aa).

A tr-type G domain is found at 8-291 (ERYRNIGISA…AVIDYLPSPV (284 aa)). GTP is bound by residues 17–24 (AHIDAGKT), 88–92 (DTPGH), and 142–145 (NKMD).

The protein belongs to the TRAFAC class translation factor GTPase superfamily. Classic translation factor GTPase family. EF-G/EF-2 subfamily.

The protein localises to the cytoplasm. Functionally, catalyzes the GTP-dependent ribosomal translocation step during translation elongation. During this step, the ribosome changes from the pre-translocational (PRE) to the post-translocational (POST) state as the newly formed A-site-bound peptidyl-tRNA and P-site-bound deacylated tRNA move to the P and E sites, respectively. Catalyzes the coordinated movement of the two tRNA molecules, the mRNA and conformational changes in the ribosome. This chain is Elongation factor G 1, found in Burkholderia orbicola (strain AU 1054).